Here is a 181-residue protein sequence, read N- to C-terminus: Inner membrane-spanning protein YciB (181 aa).

5 helical membrane-spanning segments follow: residues 10-30, 50-70, 72-92, 118-138, and 148-168; these read LIIFFAVYKFFDIYIASGALI, MHLITFAMVTVFGTLTLVFHD, AFIKWKVTIIYALFALALGVS, VTWYWVSFFAICGLVNIYVAF, and FKVFGLTALTLINTVITVFYL.

The protein belongs to the YciB family.

It is found in the cell inner membrane. In terms of biological role, plays a role in cell envelope biogenesis, maintenance of cell envelope integrity and membrane homeostasis. This Shewanella sp. (strain MR-4) protein is Inner membrane-spanning protein YciB.